A 107-amino-acid chain; its full sequence is SH3 domain-binding glutamic acid-rich-like protein 2 (107 aa).

Positions 61–67 (QGNPLPP) match the SH3-binding motif.

Belongs to the SH3BGR family. In terms of tissue distribution, highly expressed in brain, placenta, liver and kidney. Expressed in retina.

The protein localises to the nucleus. The polypeptide is SH3 domain-binding glutamic acid-rich-like protein 2 (SH3BGRL2) (Homo sapiens (Human)).